The following is a 329-amino-acid chain: Flotillin-like protein FloA (329 aa).

Helical transmembrane passes span 5–25 (IFLL…LSFI) and 27–47 (LGLW…TLVG).

This sequence belongs to the flotillin-like FloA family. In terms of assembly, homooligomerizes.

The protein localises to the cell membrane. Its subcellular location is the membrane raft. In terms of biological role, found in functional membrane microdomains (FMM) that may be equivalent to eukaryotic membrane rafts. FMMs are highly dynamic and increase in number as cells age. Flotillins are thought to be important factors in membrane fluidity. The chain is Flotillin-like protein FloA from Thermoanaerobacter sp. (strain X514).